The following is a 198-amino-acid chain: MSELLIPLDKYLAAGLHIGTQQKTADMEKYIYRVRSDGLYVLDIRKTNDRVIAASKFLSKYEPDDILAVSTRQYGQEPVRKFGEVTGARTIPGRFIPGTLTNPNYAKFIEPEVLVATDPRSDSQAIIEAKQIGIPVVALCDTENLLGNVDIAIPVNNKGRKAIALVYWLLARQFLREKGILKEDEDLDIPPTEFELKI.

Belongs to the universal ribosomal protein uS2 family.

The protein is Small ribosomal subunit protein uS2 (rps2) of Methanothermobacter thermautotrophicus (strain ATCC 29096 / DSM 1053 / JCM 10044 / NBRC 100330 / Delta H) (Methanobacterium thermoautotrophicum).